The sequence spans 201 residues: Charged multivesicular body protein 6 (201 aa).

A lipid anchor (N-myristoyl glycine) is attached at G2. Positions 10–145 (QSRVTEQDKA…YQRQIDELLA (136 aa)) form a coiled coil. A Phosphoserine modification is found at S119. A Phosphothreonine modification is found at T130. The Type-2 MIT-interacting motif motif lies at 168–179 (IELPEVPSEPLP). The tract at residues 170-181 (LPEVPSEPLPEK) is interaction with VPS4A.

It belongs to the SNF7 family. In terms of assembly, probable core component of the endosomal sorting required for transport complex III (ESCRT-III). ESCRT-III components are thought to multimerize to form a flat lattice on the perimeter membrane of the endosome. Several assembly forms of ESCRT-III may exist that interact and act sequentially. Interacts with VPS4A; the interaction is direct. Interacts with VPS4B; the interaction is direct. Interacts with CHMP4A, CHMP4B and CHMP4C. Interacts with SNF8, VPS25 and VPS36. In terms of processing, ISGylated in a CHMP5-dependent manner. Isgylation weakens its interaction with VPS4A. Ubiquitously expressed.

It is found in the endomembrane system. It localises to the endosome membrane. Its subcellular location is the late endosome membrane. The protein localises to the membrane. Its function is as follows. Probable core component of the endosomal sorting required for transport complex III (ESCRT-III) which is involved in multivesicular bodies (MVBs) formation and sorting of endosomal cargo proteins into MVBs. MVBs contain intraluminal vesicles (ILVs) that are generated by invagination and scission from the limiting membrane of the endosome and mostly are delivered to lysosomes enabling degradation of membrane proteins, such as stimulated growth factor receptors, lysosomal enzymes and lipids. The MVB pathway appears to require the sequential function of ESCRT-O, -I,-II and -III complexes. ESCRT-III proteins mostly dissociate from the invaginating membrane before the ILV is released. The ESCRT machinery also functions in topologically equivalent membrane fission events, such as the terminal stages of cytokinesis and the budding of enveloped viruses (HIV-1 and other lentiviruses). ESCRT-III proteins are believed to mediate the necessary vesicle extrusion and/or membrane fission activities, possibly in conjunction with the AAA ATPase VPS4. In the ESCRT-III complex, it probably serves as an acceptor for the ESCRT-II complex on endosomal membranes. The chain is Charged multivesicular body protein 6 (CHMP6) from Homo sapiens (Human).